Consider the following 493-residue polypeptide: Probable malate:quinone oxidoreductase (493 aa).

The protein belongs to the MQO family. It depends on FAD as a cofactor.

The enzyme catalyses (S)-malate + a quinone = a quinol + oxaloacetate. It participates in carbohydrate metabolism; tricarboxylic acid cycle; oxaloacetate from (S)-malate (quinone route): step 1/1. This chain is Probable malate:quinone oxidoreductase, found in Mycobacterium tuberculosis (strain ATCC 25177 / H37Ra).